A 613-amino-acid chain; its full sequence is YTH domain-containing family protein 2 (613 aa).

Disordered stretches follow at residues M1–R43, S215–A234, and A244–A396. The tract at residues S2–E397 is localization to mRNA processing bodies (P-bodies). Residues N16–D27 show a composition bias toward polar residues. Composition is skewed to low complexity over residues S218–A234, N295–G307, and P345–P360. An interaction with m6A-containing mRNAs region spans residues P398 to K613. The 135-residue stretch at G423–I557 folds into the YTH domain. RNA contacts are provided by residues K429–Y431, D435, W445–C446, N475, W499, and W504. Basic and acidic residues-rich tracts occupy residues E578–E587 and R604–K613. Residues E578–K613 form a disordered region.

It belongs to the YTHDF family. YTHDF2 subfamily.

It localises to the cytoplasm. The protein resides in the cytosol. Its subcellular location is the P-body. The protein localises to the stress granule. It is found in the nucleus. Specifically recognizes and binds N6-methyladenosine (m6A)-containing RNAs, and regulates their stability. M6A is a modification present at internal sites of mRNAs and some non-coding RNAs and plays a role in mRNA stability and processing. Acts as a regulator of mRNA stability by promoting degradation of m6A-containing mRNAs. The YTHDF paralogs (ythdf1, ythdf2 and ythdf3) share m6A-containing mRNAs targets and act redundantly to mediate mRNA degradation and cellular differentiation. Plays a key role in maternal-to-zygotic transition during early embryonic development, the process during which maternally inherited mRNAs are degraded: acts by binding m6A-containing maternal mRNAs and promoting their degradation. More than one-third of maternal mRNAs can be modified by m6A. Binding to m6A-containing mRNAs results in mRNA degradation. Also involved in hematopoietic stem cells specification by binding to m6A-containing mRNAs, such as notch1a, and promote their degradation. The decreased Notch signaling following notch1a degradation promotes endothelial to hematopoietic transition. Promotes formation of phase-separated membraneless compartments, such as P-bodies or stress granules, by undergoing liquid-liquid phase separation upon binding to mRNAs containing multiple m6A-modified residues: polymethylated mRNAs act as a multivalent scaffold for the binding of YTHDF proteins, juxtaposing their disordered regions and thereby leading to phase separation. The resulting mRNA-YTHDF complexes then partition into different endogenous phase-separated membraneless compartments, such as P-bodies, stress granules or neuronal RNA granules. The chain is YTH domain-containing family protein 2 from Danio rerio (Zebrafish).